Consider the following 441-residue polypeptide: Phosphoribosylamine--glycine ligase (441 aa).

An ATP-grasp domain is found at 112–319 (RNFMKKYGIE…FTEIMSAVVK (208 aa)). 139–196 (IEKLGDVAVKPSGLTGGKGVKVMGDQLPDLKAAKDYTSELLEKGPVVIEERFIGEEFT) is an ATP binding site. Mg(2+) contacts are provided by Q277, E289, and N291. Positions 277, 289, and 291 each coordinate Mn(2+).

The protein belongs to the GARS family. Mg(2+) is required as a cofactor. Requires Mn(2+) as cofactor.

The enzyme catalyses 5-phospho-beta-D-ribosylamine + glycine + ATP = N(1)-(5-phospho-beta-D-ribosyl)glycinamide + ADP + phosphate + H(+). It functions in the pathway purine metabolism; IMP biosynthesis via de novo pathway; N(1)-(5-phospho-D-ribosyl)glycinamide from 5-phospho-alpha-D-ribose 1-diphosphate: step 2/2. This is Phosphoribosylamine--glycine ligase from Methanosarcina acetivorans (strain ATCC 35395 / DSM 2834 / JCM 12185 / C2A).